An 86-amino-acid polypeptide reads, in one-letter code: YcgL domain-containing protein XCV4171 (86 aa).

In terms of domain architecture, YcgL spans 1–83 (MHAYVYKSQR…PKTIVLAGEC (83 aa)).

The sequence is that of YcgL domain-containing protein XCV4171 from Xanthomonas euvesicatoria pv. vesicatoria (strain 85-10) (Xanthomonas campestris pv. vesicatoria).